Here is a 224-residue protein sequence, read N- to C-terminus: Phosphoribosylformylglycinamidine synthase subunit PurQ (224 aa).

The Glutamine amidotransferase type-1 domain occupies 3–224 (FGVVVFPGSN…GLLEKVVALA (222 aa)). The active-site Nucleophile is the cysteine 86. Active-site residues include histidine 195 and glutamate 197.

In terms of assembly, part of the FGAM synthase complex composed of 1 PurL, 1 PurQ and 2 PurS subunits.

It is found in the cytoplasm. It catalyses the reaction N(2)-formyl-N(1)-(5-phospho-beta-D-ribosyl)glycinamide + L-glutamine + ATP + H2O = 2-formamido-N(1)-(5-O-phospho-beta-D-ribosyl)acetamidine + L-glutamate + ADP + phosphate + H(+). The enzyme catalyses L-glutamine + H2O = L-glutamate + NH4(+). The protein operates within purine metabolism; IMP biosynthesis via de novo pathway; 5-amino-1-(5-phospho-D-ribosyl)imidazole from N(2)-formyl-N(1)-(5-phospho-D-ribosyl)glycinamide: step 1/2. In terms of biological role, part of the phosphoribosylformylglycinamidine synthase complex involved in the purines biosynthetic pathway. Catalyzes the ATP-dependent conversion of formylglycinamide ribonucleotide (FGAR) and glutamine to yield formylglycinamidine ribonucleotide (FGAM) and glutamate. The FGAM synthase complex is composed of three subunits. PurQ produces an ammonia molecule by converting glutamine to glutamate. PurL transfers the ammonia molecule to FGAR to form FGAM in an ATP-dependent manner. PurS interacts with PurQ and PurL and is thought to assist in the transfer of the ammonia molecule from PurQ to PurL. The chain is Phosphoribosylformylglycinamidine synthase subunit PurQ from Trichormus variabilis (strain ATCC 29413 / PCC 7937) (Anabaena variabilis).